The primary structure comprises 306 residues: tRNA pseudouridine synthase B (306 aa).

Catalysis depends on D48, which acts as the Nucleophile.

Belongs to the pseudouridine synthase TruB family. Type 1 subfamily.

The enzyme catalyses uridine(55) in tRNA = pseudouridine(55) in tRNA. In terms of biological role, responsible for synthesis of pseudouridine from uracil-55 in the psi GC loop of transfer RNAs. The chain is tRNA pseudouridine synthase B from Ectopseudomonas mendocina (strain ymp) (Pseudomonas mendocina).